The sequence spans 537 residues: Organic anion transporter 3 (537 aa).

Over Met-1 to Gly-11 the chain is Cytoplasmic. Ser-4 bears the Phosphoserine mark. A helical transmembrane segment spans residues Ser-12–Ala-32. The Extracellular portion of the chain corresponds to Asn-33–Glu-123. Asn-81 carries an N-linked (GlcNAc...) asparagine glycan. The helical transmembrane segment at Met-124–Ser-144 threads the bilayer. Residues Asp-145 to Lys-150 are Cytoplasmic-facing. A helical transmembrane segment spans residues Pro-151 to Pro-171. Residues Ser-172–Tyr-176 lie on the Extracellular side of the membrane. Residues Met-177 to Leu-197 form a helical membrane-spanning segment. The Cytoplasmic portion of the chain corresponds to Asn-198 to Thr-212. A helical membrane pass occupies residues Thr-213–Pro-233. Over Gln-234–Arg-236 the chain is Extracellular. A helical transmembrane segment spans residues Trp-237–Pro-257. Residues Glu-258 to Thr-327 lie on the Cytoplasmic side of the membrane. The chain crosses the membrane as a helical span at residues Phe-328–Val-348. Topologically, residues Glu-349–Asn-354 are extracellular. The chain crosses the membrane as a helical span at residues Ile-355–Leu-375. Residues Ser-376–Arg-383 are Cytoplasmic-facing. Residues Ile-384–Ser-404 traverse the membrane as a helical segment. Over Ser-405 to Arg-411 the chain is Extracellular. A helical transmembrane segment spans residues Thr-412–Tyr-432. The Cytoplasmic portion of the chain corresponds to Thr-433–Pro-471. A helical membrane pass occupies residues Phe-472–Leu-492. The Extracellular segment spans residues Leu-493 to Pro-537. Residues Gln-513–Pro-537 form a disordered region.

This sequence belongs to the major facilitator (TC 2.A.1) superfamily. Organic cation transporter (TC 2.A.1.19) family. In terms of tissue distribution, expressed mainly in kidney. In kidney, detected in almost all parts of the nephron, including macula densa cells. Expressed (at protein level) throughout the renal cortex. Widely distributed in the brain with no large regional differences. Expressed in the choroid plexus (CP, located in the ventricles of the brain). Expressed in developing bone. Weakly expressed in brain and eye.

It localises to the basolateral cell membrane. It carries out the reaction estrone 3-sulfate(out) + glutarate(in) = estrone 3-sulfate(in) + glutarate(out). The enzyme catalyses estrone 3-sulfate(in) + 2-oxoglutarate(out) = estrone 3-sulfate(out) + 2-oxoglutarate(in). The catalysed reaction is taurocholate(out) + glutarate(in) = taurocholate(in) + glutarate(out). It catalyses the reaction dehydroepiandrosterone 3-sulfate(out) + glutarate(in) = dehydroepiandrosterone 3-sulfate(in) + glutarate(out). It carries out the reaction glutarate(in) + 2-oxoglutarate(out) = glutarate(out) + 2-oxoglutarate(in). The enzyme catalyses urate(in) + 2-oxoglutarate(out) = urate(out) + 2-oxoglutarate(in). The catalysed reaction is prostaglandin F2alpha(out) + glutarate(in) = prostaglandin F2alpha(in) + glutarate(out). It catalyses the reaction prostaglandin F2alpha(out) + 2-oxoglutarate(in) = prostaglandin F2alpha(in) + 2-oxoglutarate(out). It carries out the reaction (R)-carnitine(out) + 2-oxoglutarate(in) = (R)-carnitine(in) + 2-oxoglutarate(out). The enzyme catalyses glutarate(in) + (R)-carnitine(out) = glutarate(out) + (R)-carnitine(in). The catalysed reaction is prostaglandin E2(out) + 2-oxoglutarate(in) = prostaglandin E2(in) + 2-oxoglutarate(out). It catalyses the reaction prostaglandin E2(out) + glutarate(in) = prostaglandin E2(in) + glutarate(out). It carries out the reaction urate(in) + glutarate(out) = urate(out) + glutarate(in). The enzyme catalyses taurocholate(out) + 2-oxoglutarate(in) = taurocholate(in) + 2-oxoglutarate(out). The catalysed reaction is dehydroepiandrosterone 3-sulfate(out) + 2-oxoglutarate(in) = dehydroepiandrosterone 3-sulfate(in) + 2-oxoglutarate(out). It catalyses the reaction kynurenate(out) + a dicarboxylate(in) = kynurenate(in) + a dicarboxylate(out). It carries out the reaction (indol-3-yl)acetate(out) + a dicarboxylate(in) = (indol-3-yl)acetate(in) + a dicarboxylate(out). The enzyme catalyses indoxyl sulfate(out) + a dicarboxylate(in) = indoxyl sulfate(in) + a dicarboxylate(out). The catalysed reaction is N-benzoylglycine(out) + a dicarboxylate(in) = N-benzoylglycine(in) + a dicarboxylate(out). It catalyses the reaction 3-carboxy-4-methyl-5-propyl-2-furanpropanoate(out) + a dicarboxylate(in) = 3-carboxy-4-methyl-5-propyl-2-furanpropanoate(in) + a dicarboxylate(out). It carries out the reaction (6R)-L-erythro-5,6,7,8-tetrahydrobiopterin(out) + a dicarboxylate(in) = (6R)-L-erythro-5,6,7,8-tetrahydrobiopterin(in) + a dicarboxylate(out). The enzyme catalyses L-erythro-7,8-dihydrobiopterin(out) + a dicarboxylate(in) = L-erythro-7,8-dihydrobiopterin(in) + a dicarboxylate(out). The catalysed reaction is L-sepiapterin(out) + a dicarboxylate(in) = L-sepiapterin(in) + a dicarboxylate(out). With respect to regulation, expression inhibited by androgens such as testosterone. In terms of biological role, functions as an organic anion/dicarboxylate exchanger that couples organic anion uptake indirectly to the sodium gradient. Transports organic anions such as estrone 3-sulfate (E1S) and urate in exchange for dicarboxylates such as glutarate or ketoglutarate (2-oxoglutarate). Plays an important role in the excretion of endogenous and exogenous organic anions, especially from the kidney and the brain. E1S transport is pH- and chloride-dependent and may also involve E1S/cGMP exchange. Responsible for the transport of prostaglandin E2 (PGE2) and prostaglandin F2(alpha) (PGF2(alpha)) in the basolateral side of the renal tubule. Involved in the transport of neuroactive tryptophan metabolites kynurenate and xanthurenate. Functions as a biopterin transporters involved in the uptake and the secretion of coenzymes tetrahydrobiopterin (BH4), dihydrobiopterin (BH2) and sepiapterin to urine, thereby determining baseline levels of blood biopterins. May be involved in the basolateral transport of steviol, a metabolite of the popular sugar substitute stevioside. May participate in the detoxification/ renal excretion of drugs and xenobiotics, such as the histamine H(2)-receptor antagonists fexofenadine and cimetidine, the antibiotic benzylpenicillin (PCG), the anionic herbicide 2,4-dichloro-phenoxyacetate (2,4-D), the diagnostic agent p-aminohippurate (PAH), the antiviral acyclovir (ACV), and the mycotoxin ochratoxin (OTA), by transporting these exogenous organic anions across the cell membrane in exchange for dicarboxylates such as 2-oxoglutarate. May contribute to the release of cortisol in the adrenals. Involved in one of the detoxification systems on the choroid plexus (CP), removes substrates such as E1S or taurocholate (TC), PCG, 2,4-D and PAH, from the cerebrospinal fluid (CSF) to the blood for eventual excretion in urine and bile. Also contributes to the uptake of several other organic compounds such as the prostanoids prostaglandin E(2) and prostaglandin F(2-alpha), L-carnitine, and the therapeutic drugs allopurinol, 6-mercaptopurine (6-MP) and 5-fluorouracil (5-FU). Mediates the transport of PAH, PCG, and the statins pravastatin and pitavastatin, from the cerebrum into the blood circulation across the blood-brain barrier (BBB). Contributes to the renal uptake of potent uremic toxins (indoxyl sulfate (IS), indole acetate (IA), hippurate/N-benzoylglycine (HA) and 3-carboxy-4-methyl-5-propyl-2-furanpropionate (CMPF)), pravastatin, PCG, E1S and dehydroepiandrosterone sulfate (DHEAS), and is partly involved in the renal uptake of temocaprilat (an angiotensin-converting enzyme (ACE) inhibitor). In summary, plays a role in the efflux of drugs and xenobiotics, helping reduce their undesired toxicological effects on the body. This is Organic anion transporter 3 (Slc22a8) from Mus musculus (Mouse).